The primary structure comprises 331 residues: Photosystem II assembly lipoprotein Ycf48 (331 aa).

Positions 1–23 are cleaved as a signal peptide; it reads MIPVIRSFLSLLLCVGLTFGLGG. Cys24 carries the N-palmitoyl cysteine lipid modification. Cys24 is lipidated: S-diacylglycerol cysteine.

The protein belongs to the Ycf48 family. Part of early PSII assembly complexes which includes D1 (psbA) and PsbI; not found in mature PSII. Binds to the lumenal side of PSII complexes. Interacts with YidC.

It localises to the cellular thylakoid membrane. Its function is as follows. A factor required for optimal assembly of photosystem II (PSII), acting in the early stages of PSII assembly. Also plays a role in replacement of photodamaged D1 (psbA). Assists YidC in synthesis of chlorophyll-binding proteins. The polypeptide is Photosystem II assembly lipoprotein Ycf48 (Synechococcus sp. (strain RCC307)).